Here is an 875-residue protein sequence, read N- to C-terminus: Alanine--tRNA ligase (875 aa).

Residues H564, H568, C666, and H670 each coordinate Zn(2+).

The protein belongs to the class-II aminoacyl-tRNA synthetase family. Homotetramer. Requires Zn(2+) as cofactor.

Its subcellular location is the cytoplasm. The enzyme catalyses tRNA(Ala) + L-alanine + ATP = L-alanyl-tRNA(Ala) + AMP + diphosphate. Catalyzes the attachment of alanine to tRNA(Ala) in a two-step reaction: alanine is first activated by ATP to form Ala-AMP and then transferred to the acceptor end of tRNA(Ala). Also edits incorrectly charged Ser-tRNA(Ala) and Gly-tRNA(Ala) via its editing domain. The protein is Alanine--tRNA ligase of Yersinia pseudotuberculosis serotype IB (strain PB1/+).